We begin with the raw amino-acid sequence, 54 residues long: Large ribosomal subunit protein bL33A (54 aa).

Belongs to the bacterial ribosomal protein bL33 family.

The protein is Large ribosomal subunit protein bL33A (rpmG1) of Mycobacterium bovis (strain ATCC BAA-935 / AF2122/97).